The chain runs to 210 residues: HTH-type transcriptional repressor FabR (210 aa).

An HTH tetR-type domain is found at 10-70 (KTRRSLVEAA…TMVDESGLML (61 aa)). The H-T-H motif DNA-binding region spans 33–52 (SLREVAREAGIAPTSFYRHF).

As to quaternary structure, homodimer.

It is found in the cytoplasm. Functionally, represses the transcription of fabB, involved in unsaturated fatty acid (UFA) biosynthesis. By controlling UFA production, FabR directly influences the physical properties of the membrane bilayer. In Citrobacter koseri (strain ATCC BAA-895 / CDC 4225-83 / SGSC4696), this protein is HTH-type transcriptional repressor FabR.